The chain runs to 263 residues: Acyl-[acyl-carrier-protein]--UDP-N-acetylglucosamine O-acyltransferase (263 aa).

The protein belongs to the transferase hexapeptide repeat family. LpxA subfamily. In terms of assembly, homotrimer.

It localises to the cytoplasm. The enzyme catalyses a (3R)-hydroxyacyl-[ACP] + UDP-N-acetyl-alpha-D-glucosamine = a UDP-3-O-[(3R)-3-hydroxyacyl]-N-acetyl-alpha-D-glucosamine + holo-[ACP]. The protein operates within glycolipid biosynthesis; lipid IV(A) biosynthesis; lipid IV(A) from (3R)-3-hydroxytetradecanoyl-[acyl-carrier-protein] and UDP-N-acetyl-alpha-D-glucosamine: step 1/6. Functionally, involved in the biosynthesis of lipid A, a phosphorylated glycolipid that anchors the lipopolysaccharide to the outer membrane of the cell. The protein is Acyl-[acyl-carrier-protein]--UDP-N-acetylglucosamine O-acyltransferase of Campylobacter jejuni subsp. doylei (strain ATCC BAA-1458 / RM4099 / 269.97).